The primary structure comprises 407 residues: Phosphopentomutase (407 aa).

Residues aspartate 10, aspartate 306, histidine 311, aspartate 347, histidine 348, and histidine 359 each contribute to the Mn(2+) site.

This sequence belongs to the phosphopentomutase family. The cofactor is Mn(2+).

The protein localises to the cytoplasm. The catalysed reaction is 2-deoxy-alpha-D-ribose 1-phosphate = 2-deoxy-D-ribose 5-phosphate. It catalyses the reaction alpha-D-ribose 1-phosphate = D-ribose 5-phosphate. Its pathway is carbohydrate degradation; 2-deoxy-D-ribose 1-phosphate degradation; D-glyceraldehyde 3-phosphate and acetaldehyde from 2-deoxy-alpha-D-ribose 1-phosphate: step 1/2. Its function is as follows. Isomerase that catalyzes the conversion of deoxy-ribose 1-phosphate (dRib-1-P) and ribose 1-phosphate (Rib-1-P) to deoxy-ribose 5-phosphate (dRib-5-P) and ribose 5-phosphate (Rib-5-P), respectively. The polypeptide is Phosphopentomutase (Edwardsiella ictaluri (strain 93-146)).